We begin with the raw amino-acid sequence, 342 residues long: Fructose-1,6-bisphosphatase class 1 (342 aa).

4 residues coordinate Mg(2+): E97, D119, L121, and D122. Substrate contacts are provided by residues 122 to 125 (DGSS), N215, Y247, and K280. E286 provides a ligand contact to Mg(2+).

This sequence belongs to the FBPase class 1 family. As to quaternary structure, homotetramer. Requires Mg(2+) as cofactor.

The protein localises to the cytoplasm. The enzyme catalyses beta-D-fructose 1,6-bisphosphate + H2O = beta-D-fructose 6-phosphate + phosphate. It functions in the pathway carbohydrate biosynthesis; gluconeogenesis. The chain is Fructose-1,6-bisphosphatase class 1 from Leptospira interrogans serogroup Icterohaemorrhagiae serovar copenhageni (strain Fiocruz L1-130).